The chain runs to 170 residues: Inosine/xanthosine triphosphatase (170 aa).

Belongs to the YjjX NTPase family. As to quaternary structure, homodimer. Requires Mg(2+) as cofactor. It depends on Mn(2+) as a cofactor.

The enzyme catalyses XTP + H2O = XDP + phosphate + H(+). The catalysed reaction is ITP + H2O = IDP + phosphate + H(+). In terms of biological role, phosphatase that hydrolyzes non-canonical purine nucleotides such as XTP and ITP to their respective diphosphate derivatives. Probably excludes non-canonical purines from DNA/RNA precursor pool, thus preventing their incorporation into DNA/RNA and avoiding chromosomal lesions. This is Inosine/xanthosine triphosphatase from Aliivibrio fischeri (strain MJ11) (Vibrio fischeri).